Reading from the N-terminus, the 265-residue chain is MRMELKMMGNVNKSNKTNEYILRRHKKKRKKKLIIFSILLISILVTLCFKHPFFNVKIVEVKDNKSIKKESIIKSSQISNENNIFYLNLNNVKNNIMSNPYILDAQIKRKLPNKIVIHIKERVALYYIEKDKKFYIIDNNGYVLEKKDNIKNMKLVRVDGIKKKDYNVGEPIFEQGNIRKNFMKNLASLIDKKDNNYEIAIVNIENMNNIQLKYRNIQIIIGDDEDLDKKLNKAFSILLQKEEIRGAKEGYINVSFKGNPVVFIK.

Topologically, residues 1-33 (MRMELKMMGNVNKSNKTNEYILRRHKKKRKKKL) are cytoplasmic. Residues 34-54 (IIFSILLISILVTLCFKHPFF) traverse the membrane as a helical segment. The POTRA domain occupies 54 to 122 (FNVKIVEVKD…NKIVIHIKER (69 aa)). Residues 55-265 (NVKIVEVKDN…FKGNPVVFIK (211 aa)) are Extracellular-facing.

This sequence belongs to the FtsQ/DivIB family. DivIB subfamily.

It localises to the cell membrane. In terms of biological role, cell division protein that may be involved in stabilizing or promoting the assembly of the division complex. This Clostridium tetani (strain Massachusetts / E88) protein is Cell division protein DivIB.